The following is a 223-amino-acid chain: UPF0502 protein Sbal_1765 (223 aa).

Belongs to the UPF0502 family.

The sequence is that of UPF0502 protein Sbal_1765 from Shewanella baltica (strain OS155 / ATCC BAA-1091).